The following is a 763-amino-acid chain: Phosphoglycerol transferase I (763 aa).

4 consecutive transmembrane segments (helical) span residues 1–21 (MSELLSFALFLASVLIYAWKA), 26–46 (WWFAATLTVLGLFVVLNITLF), 77–97 (ILPGIGIVLGLTAVFGALGWI), and 108–128 (FGYSLLALLLALGSVDASPAF).

Belongs to the OpgB family.

Its subcellular location is the cell inner membrane. The enzyme catalyses a phosphatidylglycerol + a membrane-derived-oligosaccharide D-glucose = a 1,2-diacyl-sn-glycerol + a membrane-derived-oligosaccharide 6-(glycerophospho)-D-glucose.. The protein operates within glycan metabolism; osmoregulated periplasmic glucan (OPG) biosynthesis. Transfers a phosphoglycerol residue from phosphatidylglycerol to the membrane-bound nascent glucan backbones. This is Phosphoglycerol transferase I from Escherichia coli O127:H6 (strain E2348/69 / EPEC).